Consider the following 237-residue polypeptide: Lectin alpha chain (237 aa).

The Mn(2+) site is built by Glu-8 and Asp-10. Residues Asp-10, Tyr-12, Asn-14, and Asp-19 each coordinate Ca(2+). Positions 12 and 14 each coordinate a carbohydrate. Positions 19 and 24 each coordinate Mn(2+). 99–100 (LY) provides a ligand contact to a carbohydrate. Asp-208 is a Ca(2+) binding site. Arg-228 lines the a carbohydrate pocket.

The protein belongs to the leguminous lectin family. As to quaternary structure, homodimer and homotetramer. Oligomerization is pH-dependent with homotetramers forming at pH 4 and above.

Functionally, D-mannose/D-glucose-binding lectin. Has anti-inflammatory activity in animal models when applied intravenously. Has antinociceptive activity in mice when applied intravenously. This is Lectin alpha chain from Canavalia boliviana.